Here is a 76-residue protein sequence, read N- to C-terminus: Kappa-actitoxin-Avd4d (76 aa).

The signal sequence occupies residues 1 to 19 (MNKALFLCLVVLCAAVVFA). The propeptide occupies 20-31 (AEDLQKAKHVPF). Cystine bridges form between Cys37-Cys72, Cys39-Cys65, and Cys55-Cys73.

It belongs to the sea anemone type 3 (BDS) potassium channel toxin family. As to expression, moderately expressed in the ectodermal tissue from the distal and proximal tentacles, body wall, and oral disk.

It is found in the secreted. It localises to the nematocyst. Blocks Kv3 voltage-gated potassium channels. Reduces blood pressure. The polypeptide is Kappa-actitoxin-Avd4d (Anemonia viridis (Snakelocks anemone)).